A 574-amino-acid polypeptide reads, in one-letter code: Transmembrane glycoprotein NMB (574 aa).

Residues 1–22 form the signal peptide; it reads MESLCGVLGFLLLAAGLPLQAA. The Extracellular portion of the chain corresponds to 23–502; the sequence is KRFRDVLGHE…DPDSPLRAVN (480 aa). N-linked (GlcNAc...) asparagine glycans are attached at residues Asn93, Asn134, Asn200, Asn249, Asn275, Asn296, Asn300, Asn306, and Asn312. The region spanning 250-338 is the PKD domain; the sequence is LSDEIFLRDL…STPPPPSTPP (89 aa). The segment at 320-353 is disordered; the sequence is PGPCPPPSPSTPPPPSTPPSPPPSPLPTLSTPSP. The span at 321–345 shows a compositional bias: pro residues; it reads GPCPPPSPSTPPPPSTPPSPPPSPL. Residues Asn463 and Asn471 are each glycosylated (N-linked (GlcNAc...) asparagine). The helical transmembrane segment at 503-523 threads the bilayer; it reads GVLISIGCLAVLVTMVTILLY. At 524–574 the chain is on the cytoplasmic side; that stretch reads KKHKAYKPIGNCPRNTVKGKGLSVLLSHAKAPFFRGDQEKDPLLQDKPRTL. Ser546 bears the Phosphoserine mark. A Cell attachment site motif is present at residues 558-560; sequence RGD.

This sequence belongs to the PMEL/NMB family. In terms of tissue distribution, may be up-regulated in bone metastatic breast cancer cells.

The protein localises to the cell membrane. The protein resides in the melanosome membrane. It localises to the early endosome membrane. In terms of biological role, could be a melanogenic enzyme. This chain is Transmembrane glycoprotein NMB (Gpnmb), found in Mus musculus (Mouse).